Here is a 178-residue protein sequence, read N- to C-terminus: Transcription factor E (178 aa).

Positions 5–89 (AEELILSLAK…YWKVNIDQIN (85 aa)) constitute an HTH TFE/IIEalpha-type domain.

This sequence belongs to the TFE family. Monomer. Interaction with RNA polymerase subunits RpoF and RpoE is necessary for Tfe stimulatory transcription activity. Able to interact with Tbp and RNA polymerase in the absence of DNA promoter. Interacts both with the preinitiation and elongation complexes.

In terms of biological role, transcription factor that plays a role in the activation of archaeal genes transcribed by RNA polymerase. Facilitates transcription initiation by enhancing TATA-box recognition by TATA-box-binding protein (Tbp), and transcription factor B (Tfb) and RNA polymerase recruitment. Not absolutely required for transcription in vitro, but particularly important in cases where Tbp or Tfb function is not optimal. It dynamically alters the nucleic acid-binding properties of RNA polymerases by stabilizing the initiation complex and destabilizing elongation complexes. Seems to translocate with the RNA polymerase following initiation and acts by binding to the non template strand of the transcription bubble in elongation complexes. The chain is Transcription factor E from Sulfurisphaera tokodaii (strain DSM 16993 / JCM 10545 / NBRC 100140 / 7) (Sulfolobus tokodaii).